A 301-amino-acid chain; its full sequence is F1 operon positive regulatory protein (301 aa).

An HTH araC/xylS-type domain is found at 8-107 (NSIIQYIEEN…GYTPRQYRMI (100 aa)). DNA-binding regions (H-T-H motif) lie at residues 26-47 (DCLV…KEYV) and 74-97 (IIEI…KKIF).

Its function is as follows. Positive regulator of F1 operon expression. This Yersinia pestis protein is F1 operon positive regulatory protein (caf1R).